The sequence spans 238 residues: tRNA1(Val) (adenine(37)-N6)-methyltransferase (238 aa).

It belongs to the methyltransferase superfamily. tRNA (adenine-N(6)-)-methyltransferase family.

The protein localises to the cytoplasm. It catalyses the reaction adenosine(37) in tRNA1(Val) + S-adenosyl-L-methionine = N(6)-methyladenosine(37) in tRNA1(Val) + S-adenosyl-L-homocysteine + H(+). Its function is as follows. Specifically methylates the adenine in position 37 of tRNA(1)(Val) (anticodon cmo5UAC). The protein is tRNA1(Val) (adenine(37)-N6)-methyltransferase of Shewanella putrefaciens (strain CN-32 / ATCC BAA-453).